The sequence spans 195 residues: Imidazoleglycerol-phosphate dehydratase (195 aa).

The protein belongs to the imidazoleglycerol-phosphate dehydratase family.

It is found in the cytoplasm. It catalyses the reaction D-erythro-1-(imidazol-4-yl)glycerol 3-phosphate = 3-(imidazol-4-yl)-2-oxopropyl phosphate + H2O. It functions in the pathway amino-acid biosynthesis; L-histidine biosynthesis; L-histidine from 5-phospho-alpha-D-ribose 1-diphosphate: step 6/9. The polypeptide is Imidazoleglycerol-phosphate dehydratase (Burkholderia mallei (strain NCTC 10247)).